Consider the following 273-residue polypeptide: Undecaprenyl-diphosphatase (273 aa).

The next 7 membrane-spanning stretches (helical) occupy residues 4–24, 43–63, 82–102, 108–128, 183–203, 217–237, and 248–268; these read LILL…FLPI, KAKV…CWEY, FVIN…LFIK, LFHP…ILWA, AAEF…FYDV, MFAT…RGFI, and FAWY…SGLV.

This sequence belongs to the UppP family.

It localises to the cell inner membrane. The enzyme catalyses di-trans,octa-cis-undecaprenyl diphosphate + H2O = di-trans,octa-cis-undecaprenyl phosphate + phosphate + H(+). Its function is as follows. Catalyzes the dephosphorylation of undecaprenyl diphosphate (UPP). Confers resistance to bacitracin. The protein is Undecaprenyl-diphosphatase of Nitrosomonas europaea (strain ATCC 19718 / CIP 103999 / KCTC 2705 / NBRC 14298).